A 181-amino-acid polypeptide reads, in one-letter code: Oligoribonuclease (181 aa).

One can recognise an Exonuclease domain in the interval 8 to 171 (LIWIDLEMTG…DDIRESVAEL (164 aa)). Tyrosine 129 is a catalytic residue.

It belongs to the oligoribonuclease family.

It localises to the cytoplasm. Functionally, 3'-to-5' exoribonuclease specific for small oligoribonucleotides. The sequence is that of Oligoribonuclease from Shigella flexneri.